A 108-amino-acid chain; its full sequence is Probable 4-amino-4-deoxy-L-arabinose-phosphoundecaprenol flippase subunit ArnE (108 aa).

A run of 3 helical transmembrane segments spans residues 32 to 52 (PLLL…LVWL), 58 to 78 (VPVG…TLAA), and 85 to 105 (TLSL…AIMG). The 73-residue stretch at 34-106 (LLWLGGSVLL…IVAGVAIMGS (73 aa)) folds into the EamA domain.

It belongs to the ArnE family. As to quaternary structure, heterodimer of ArnE and ArnF.

It localises to the cell inner membrane. It functions in the pathway bacterial outer membrane biogenesis; lipopolysaccharide biosynthesis. Translocates 4-amino-4-deoxy-L-arabinose-phosphoundecaprenol (alpha-L-Ara4N-phosphoundecaprenol) from the cytoplasmic to the periplasmic side of the inner membrane. The chain is Probable 4-amino-4-deoxy-L-arabinose-phosphoundecaprenol flippase subunit ArnE from Erwinia tasmaniensis (strain DSM 17950 / CFBP 7177 / CIP 109463 / NCPPB 4357 / Et1/99).